A 473-amino-acid polypeptide reads, in one-letter code: M-phase inducer phosphatase 3 (473 aa).

Residues 1–23 (MSTELFSSTREEGSSGSGPSFRS) are disordered. Serine 2 carries the N-acetylserine modification. Phosphoserine occurs at positions 20 and 38. Phosphothreonine is present on threonine 48. 3 positions are modified to phosphoserine: serine 57, serine 61, and serine 64. Threonine 67 bears the Phosphothreonine mark. Position 122 is a phosphoserine; by CDK1 (serine 122). Serine 129 is modified (phosphoserine). Position 130 is a phosphothreonine (threonine 130). The tract at residues 132–158 (NGLDRGHRKRDAMCSSSANKENDNGNL) is disordered. A compositionally biased stretch (polar residues) spans 145 to 158 (CSSSANKENDNGNL). At serine 168 the chain carries Phosphoserine. Serine 191 and serine 198 each carry phosphoserine; by PLK3. Phosphoserine; by CDK1 is present on serine 214. Phosphoserine; by CHEK1, CHEK2, BRSK1, MAPK14 AND MARK3 is present on serine 216. The Rhodanese domain occupies 321-428 (LIEKFYVIDC…FFPEYMELCE (108 aa)). Positions 334–379 (YEYLGGHIQGALNLYSQEELFNFFLKKPIVPLDTQKRIIIVFHCEF) are HIV-1 Vpr binding site. Cysteine 377 is a catalytic residue. Serine 472 carries the post-translational modification Phosphoserine.

The protein belongs to the MPI phosphatase family. As to quaternary structure, interacts with MAPK14 and 14-3-3 proteins. When phosphorylated on Ser-129 and/or Thr-130, interacts with PLK1. Interacts with MARK3/C-TAK1. In terms of assembly, (Microbial infection) Interacts with HIV-1 Vpr; this interaction inactivates CDC25C phosphatase activity. Post-translationally, phosphorylated by CHEK1 and MAPK14 at Ser-216. This phosphorylation creates a binding site for 14-3-3 protein and inhibits the phosphatase. Phosphorylated by PLK4. Phosphorylated by PLK1, leading to activate the phosphatase activity. Phosphorylation by PLK3 at Ser-191 promotes nuclear translocation. Ser-198 is a minor phosphorylation site. Was initially reported to be phosphorylated by PLK3 at Ser-216. However, such phosphorylation by PLK3 was not confirmed by other groups. Phosphorylation at Thr-48, Thr-67, Ser-122, Thr-130, Ser-168 and Ser-214 occurs at G2 and G2-M transition and is probably catalyzed by CDK1. Ser-168 phosphorylation levels are lower than those at the other 5 CDK1 sites. Phosphorylation by CDK1 leads to increased activity.

Its subcellular location is the nucleus. It catalyses the reaction O-phospho-L-tyrosyl-[protein] + H2O = L-tyrosyl-[protein] + phosphate. Functions as a dosage-dependent inducer in mitotic control. Tyrosine protein phosphatase required for progression of the cell cycle. When phosphorylated, highly effective in activating G2 cells into prophase. Directly dephosphorylates CDK1 and activates its kinase activity. This chain is M-phase inducer phosphatase 3 (CDC25C), found in Homo sapiens (Human).